Consider the following 266-residue polypeptide: 22 kDa alpha-zein 8 (266 aa).

Positions 1-21 (MATKILALLALLALFVSATNA) are cleaved as a signal peptide.

This sequence belongs to the zein family.

Its function is as follows. Zeins are major seed storage proteins. The protein is 22 kDa alpha-zein 8 of Zea mays (Maize).